The chain runs to 257 residues: MRFDVVTLFPDMFGLVRDQGVTGRAHAQGLWALHAWNPRDFTHDVHRTVDDRPYGGGPGMVMMAAPLEAAVAAAQAARAAQGLQAAPVILLSPAGRRYDQAEATTLAAGTGAIFICGRYEGVDQRFIERCVTHELSLGDFVLSGGELAALAMMDAAVRLLPGVLNDGDSALQDSFNAALDGLLDSPHYTRPEVYEGVPVPQPLLSGHHANIARWRREQSLRLTASRRPELIERARGEGRLSKADERFLASLAGERES.

Residues Gly-117 and 137–142 contribute to the S-adenosyl-L-methionine site; that span reads LGDFVL.

The protein belongs to the RNA methyltransferase TrmD family. Homodimer.

It localises to the cytoplasm. The catalysed reaction is guanosine(37) in tRNA + S-adenosyl-L-methionine = N(1)-methylguanosine(37) in tRNA + S-adenosyl-L-homocysteine + H(+). Its function is as follows. Specifically methylates guanosine-37 in various tRNAs. The sequence is that of tRNA (guanine-N(1)-)-methyltransferase from Bordetella pertussis (strain Tohama I / ATCC BAA-589 / NCTC 13251).